Here is a 269-residue protein sequence, read N- to C-terminus: Iron(3+)-hydroxamate import ATP-binding protein FhuC (269 aa).

The 237-residue stretch at 4–240 (LSTEQLGIGY…DILKQVFQID (237 aa)) folds into the ABC transporter domain. ATP contacts are provided by residues 36–43 (GPNGCGKS) and 160–171 (LLLLDEPTTYLD).

This sequence belongs to the ABC transporter superfamily. Iron (Fe3+)-hydroxamate importer (TC 3.A.1.14.7) family. In terms of assembly, the complex is composed of an ATP-binding protein (FhuC), two transmembrane proteins (FhuB and FhuG) and a solute-binding protein (FhuD or YxeB).

The protein resides in the cell membrane. The catalysed reaction is ATP + H2O + Fe(3+)-hydroxamate complex-[hydroxamate-binding protein]Side 1 = ADP + phosphate + Fe(3+)-hydroxamate complexSide 2 + [hydroxamate-binding protein]Side 1.. Functionally, part of the ABC transporter complex FhuBGCD involved in iron(3+)-hydroxamate import. Responsible for energy coupling to the transport system. The chain is Iron(3+)-hydroxamate import ATP-binding protein FhuC (fhuC) from Bacillus subtilis (strain 168).